Consider the following 218-residue polypeptide: Chromophore lyase CpcT/CpeT 1 (218 aa).

Belongs to the CpcT/CpeT biliprotein lyase family.

Covalently attaches a chromophore to Cys residue(s) of phycobiliproteins. This Synechococcus sp. (strain JA-3-3Ab) (Cyanobacteria bacterium Yellowstone A-Prime) protein is Chromophore lyase CpcT/CpeT 1.